A 431-amino-acid chain; its full sequence is Adenylosuccinate synthetase (431 aa).

GTP is bound by residues 12-18 and 40-42; these read GDEGKGK and GHT. Asp-13 functions as the Proton acceptor in the catalytic mechanism. 2 residues coordinate Mg(2+): Asp-13 and Gly-40. IMP-binding positions include 13 to 16, 38 to 41, Thr-129, Arg-143, Gln-224, Thr-239, and Arg-303; these read DEGK and NAGH. His-41 (proton donor) is an active-site residue. 299–305 is a substrate binding site; sequence VTTGRAR. GTP-binding positions include Arg-305, 331 to 333, and 413 to 415; these read KLD and GVG.

Belongs to the adenylosuccinate synthetase family. In terms of assembly, homodimer. Mg(2+) is required as a cofactor.

The protein resides in the cytoplasm. It catalyses the reaction IMP + L-aspartate + GTP = N(6)-(1,2-dicarboxyethyl)-AMP + GDP + phosphate + 2 H(+). It functions in the pathway purine metabolism; AMP biosynthesis via de novo pathway; AMP from IMP: step 1/2. In terms of biological role, plays an important role in the de novo pathway of purine nucleotide biosynthesis. Catalyzes the first committed step in the biosynthesis of AMP from IMP. In Mycobacteroides abscessus (strain ATCC 19977 / DSM 44196 / CCUG 20993 / CIP 104536 / JCM 13569 / NCTC 13031 / TMC 1543 / L948) (Mycobacterium abscessus), this protein is Adenylosuccinate synthetase.